A 251-amino-acid polypeptide reads, in one-letter code: Ubiquinone/menaquinone biosynthesis C-methyltransferase UbiE (251 aa).

S-adenosyl-L-methionine is bound by residues Thr74, Asp95, 123–124 (NA), and Ser140.

The protein belongs to the class I-like SAM-binding methyltransferase superfamily. MenG/UbiE family.

It carries out the reaction a 2-demethylmenaquinol + S-adenosyl-L-methionine = a menaquinol + S-adenosyl-L-homocysteine + H(+). The catalysed reaction is a 2-methoxy-6-(all-trans-polyprenyl)benzene-1,4-diol + S-adenosyl-L-methionine = a 5-methoxy-2-methyl-3-(all-trans-polyprenyl)benzene-1,4-diol + S-adenosyl-L-homocysteine + H(+). It participates in quinol/quinone metabolism; menaquinone biosynthesis; menaquinol from 1,4-dihydroxy-2-naphthoate: step 2/2. It functions in the pathway cofactor biosynthesis; ubiquinone biosynthesis. Methyltransferase required for the conversion of demethylmenaquinol (DMKH2) to menaquinol (MKH2) and the conversion of 2-polyprenyl-6-methoxy-1,4-benzoquinol (DDMQH2) to 2-polyprenyl-3-methyl-6-methoxy-1,4-benzoquinol (DMQH2). This is Ubiquinone/menaquinone biosynthesis C-methyltransferase UbiE from Escherichia coli O1:K1 / APEC.